Here is a 224-residue protein sequence, read N- to C-terminus: UPF0758 protein Bpro_0948 (224 aa).

Residues 102-224 form the MPN domain; that stretch reads LFSTPQAVRD…AVSMAELGLL (123 aa). Zn(2+)-binding residues include His-173, His-175, and Asp-186. Residues 173–186 carry the JAMM motif motif; it reads HNHPSGAATPSRAD.

Belongs to the UPF0758 family.

The sequence is that of UPF0758 protein Bpro_0948 from Polaromonas sp. (strain JS666 / ATCC BAA-500).